Reading from the N-terminus, the 104-residue chain is N(4)-acetylcytidine amidohydrolase (104 aa).

Residues 6-94 (ITFFQRFQND…IAEIYPNQTQ (89 aa)) form the ASCH domain. K21 (proton acceptor) is an active-site residue. Catalysis depends on T24, which acts as the Nucleophile. The active-site Proton donor is E74.

It belongs to the N(4)-acetylcytidine amidohydrolase family.

It carries out the reaction N(4)-acetylcytidine + H2O = cytidine + acetate + H(+). The enzyme catalyses N(4)-acetyl-2'-deoxycytidine + H2O = 2'-deoxycytidine + acetate + H(+). The catalysed reaction is N(4)-acetylcytosine + H2O = cytosine + acetate + H(+). Functionally, catalyzes the hydrolysis of N(4)-acetylcytidine (ac4C). The sequence is that of N(4)-acetylcytidine amidohydrolase (yqfB) from Salmonella agona (strain SL483).